The chain runs to 217 residues: Polyadenylate-binding protein 3 (217 aa).

The segment at 1 to 28 is disordered; sequence MEEEEHEVYGGEIPEVGDTDVPDPDIDM. Over residues 15 to 28 the composition is skewed to acidic residues; it reads EVGDTDVPDPDIDM. Residues 30–71 adopt a coiled-coil conformation; it reads AADEDAVTELAEMKRRLKEMEEEAAALREMQAKVEKEMGATQ. The tract at residues 75 to 216 is necessary for homooligomerization; the sequence is SMAANQEGKE…FRRPMRYMPY (142 aa). One can recognise an RRM domain in the interval 89–165; sequence RSVYVGNVDY…RQLKVSPKRT (77 aa). Residues 162 to 169 carry the Nuclear localization signal motif; sequence PKRTNVPG.

Monomer and homooligomer. Binds RNA as a monomer and oligomerizes when bound to poly(A). Forms a complex with cleavage and polyadenylation specificity factor (CPSF) subunits PAPS4, PABN1, PABN2, CSTF50 and FIPS5. Interacts with CSP3.

It is found in the nucleus speckle. It localises to the cytoplasm. Involved in the 3'-end formation of mRNA precursors (pre-mRNA) by the addition of a poly(A) tail of 200-250 nt to the upstream cleavage product. Stimulates poly(A) polymerase (PAPOLA) conferring processivity on the poly(A) tail elongation reaction and also controls the poly(A) tail length. Increases the affinity of poly(A) polymerase for RNA. Binds to poly(A) and to poly(G) with high affinity. May protect the poly(A) tail from degradation. In Arabidopsis thaliana (Mouse-ear cress), this protein is Polyadenylate-binding protein 3.